The following is a 197-amino-acid chain: Class A basic helix-loop-helix protein 15 (197 aa).

Over residues 1–12 (MKTKNRPPRRRT) the composition is skewed to basic residues. 2 disordered regions span residues 1–82 (MKTK…ERER) and 178–197 (QPQG…REGS). Residues T12 and T25 each carry the phosphothreonine modification. The segment covering 65 to 82 (GRRENSVQRRLESNERER) has biased composition (basic and acidic residues). One can recognise a bHLH domain in the interval 72-124 (QRRLESNERERQRMHKLNNAFQALREVIPHVRADKKLSKIETLTLAKNYIKSL).

As to quaternary structure, forms homodimers or heterodimers with TCF3 gene products E12 and E47. These dimers bind to the E-box site, however, heterodimer with MYOD1 does not bind target DNA. Expressed in pancreatic tissue only in acinar cells. There is a complete absence of expression in intra- or interlobular pancreatic ducts and in all islet cells.

It is found in the nucleus. Plays a role in controlling the transcriptional activity of MyoD, ensuring that expanding myoblast populations remain undifferentiated. Repression may occur through muscle-specific E-box occupancy by homodimers. May also negatively regulate bHLH-mediated transcription through an N-terminal repressor domain. Serves as a key regulator of acinar cell function, stability, and identity. Also required for normal organelle localization in exocrine cells and for mitochondrial calcium ion transport. May function as a unique regulator of gene expression in several different embryonic and postnatal cell lineages. Binds to the E-box consensus sequence 5'-CANNTG-3'. The protein is Class A basic helix-loop-helix protein 15 (Bhlha15) of Mus musculus (Mouse).